The chain runs to 533 residues: Zona pellucida sperm-binding protein 3 receptor (533 aa).

The signal sequence occupies residues 1–28 (MFPRLQAVSAPALLQITLMAVLLAPVLG). Sushi domains follow at residues 29–88 (DCGP…FCAK), 89–150 (KRCR…ECVI), 151–215 (VKCD…TCEK), 216–275 (VICR…TCEP), 276–342 (NGCI…GCER), 343–408 (VCCP…ACES), and 409–467 (AVCL…KCEW). Disulfide bonds link Cys30–Cys74, Cys60–Cys86, Cys91–Cys132, Cys118–Cys148, Cys153–Cys196, Cys182–Cys213, Cys218–Cys260, Cys246–Cys273, Cys278–Cys328, Cys312–Cys340, Cys345–Cys393, Cys378–Cys406, Cys411–Cys452, and Cys438–Cys465. Residues Asn68 and Asn77 are each glycosylated (N-linked (GlcNAc...) asparagine). 3 N-linked (GlcNAc...) asparagine glycosylation sites follow: Asn185, Asn191, and Asn200. N-linked (GlcNAc...) asparagine glycosylation is found at Asn433 and Asn455.

As to quaternary structure, homooligomer; disulfide-linked. May contain 6-8 monomers per oligomer. The N-terminus may be blocked. Testis. Not expressed in heart, brain, liver or kidney.

Its subcellular location is the cytoplasmic vesicle. The protein resides in the secretory vesicle. It localises to the acrosome lumen. In terms of biological role, probably involved in the formation of the dense core and M1 domain of the acrosome. May also regulate the release of certain secretory proteins following the acrosomal reaction. The polypeptide is Zona pellucida sperm-binding protein 3 receptor (ZP3R) (Cavia porcellus (Guinea pig)).